The following is a 140-amino-acid chain: ATP synthase epsilon chain (140 aa).

This sequence belongs to the ATPase epsilon chain family. In terms of assembly, F-type ATPases have 2 components, CF(1) - the catalytic core - and CF(0) - the membrane proton channel. CF(1) has five subunits: alpha(3), beta(3), gamma(1), delta(1), epsilon(1). CF(0) has three main subunits: a, b and c.

The protein localises to the cell inner membrane. Functionally, produces ATP from ADP in the presence of a proton gradient across the membrane. The chain is ATP synthase epsilon chain from Neisseria meningitidis serogroup A / serotype 4A (strain DSM 15465 / Z2491).